A 281-amino-acid polypeptide reads, in one-letter code: Lectin CaBo (281 aa).

The N-terminal stretch at 1–29 is a signal peptide; sequence MAISKKSSLYLPIFTFITMLLMVVNKVSS. Asp-119 lines the Ca(2+) pocket. A carbohydrate is bound at residue Arg-139. A propeptide spans 149-163 (removed in mature form); the sequence is IIKNSTTIDFNAAYN. Residues Glu-171 and Asp-173 each contribute to the Mn(2+) site. Asp-173, Tyr-175, Asn-177, and Asp-182 together coordinate Ca(2+). Tyr-175 is a binding site for a carbohydrate. Positions 182 and 187 each coordinate Mn(2+). Residue 262–263 coordinates a carbohydrate; the sequence is LY.

The protein belongs to the leguminous lectin family. Equilibrium between homodimer and homotetramer. The mature chain consists of residues 164-281 followed by residues 30-148. Concanavalin A-like lectins of the Diocleinae subtribe undergo proteolytic processing referred to as circular permutation. The propeptide is split into an N-terminal and a C-terminal part, the gamma and beta chain, respectively. These are then religated in beta-gamma order to form the mature alpha chain. The beta and gamma chains can often be detected in cell extracts.

In terms of biological role, D-mannose-specific lectin. The protein is Lectin CaBo of Canavalia bonariensis.